Reading from the N-terminus, the 188-residue chain is Ion-translocating oxidoreductase complex subunit B (188 aa).

The segment at 1-26 is hydrophobic; that stretch reads MNGVLLAIGVLLPICLASGALLGYAA. Residues 32–90 enclose the 4Fe-4S domain; that stretch reads QGDPVAERVNALLPQTQCGQCGYPGCKPYAEAIAAGDRINKCPPGGEATIQALADLLDL. Residues Cys49, Cys52, Cys57, Cys73, Cys113, Cys116, Cys119, Cys123, Cys143, Cys146, Cys149, and Cys153 each contribute to the [4Fe-4S] cluster site. 4Fe-4S ferredoxin-type domains follow at residues 104–133 and 134–163; these read RVAY…GAAR and LMHT…MREI.

It belongs to the 4Fe4S bacterial-type ferredoxin family. RnfB subfamily. The complex is composed of six subunits: RnfA, RnfB, RnfC, RnfD, RnfE and RnfG. [4Fe-4S] cluster serves as cofactor.

The protein localises to the cell inner membrane. Its function is as follows. Part of a membrane-bound complex that couples electron transfer with translocation of ions across the membrane. In Pseudomonas paraeruginosa (strain DSM 24068 / PA7) (Pseudomonas aeruginosa (strain PA7)), this protein is Ion-translocating oxidoreductase complex subunit B.